A 577-amino-acid polypeptide reads, in one-letter code: E3 ubiquitin protein ligase RIN3 (577 aa).

A run of 6 helical transmembrane segments spans residues 3-23 (ITYL…LQVW), 58-78 (TTIA…VLSL), 120-140 (GVLW…QALA), 162-182 (YSAL…SLMI), 191-211 (YLLL…ALLI), and 272-292 (YLHI…VLFL). An RING-type; atypical zinc finger spans residues 337 to 379 (CAICREPMAKAKRLHCNHLFHLGCLRSWLDQGLNEVYSCPTCR). The CUE domain maps to 537–577 (SILAMAETVREVLPHVPDEIIFQDLQRTNSVSVTVNNLLQM).

As to quaternary structure, interacts (via C-terminus) with RPM1 (via N-terminus).

Its subcellular location is the membrane. It catalyses the reaction S-ubiquitinyl-[E2 ubiquitin-conjugating enzyme]-L-cysteine + [acceptor protein]-L-lysine = [E2 ubiquitin-conjugating enzyme]-L-cysteine + N(6)-ubiquitinyl-[acceptor protein]-L-lysine.. It participates in protein modification; protein ubiquitination. In terms of biological role, E3 ubiquitin protein ligase that acts as a positive regulator of RPM1- and RPS2-dependent hypersensitive response (HR), in association with RIN2. Probably not required for RPM1 degradation during HR. The protein is E3 ubiquitin protein ligase RIN3 (RIN3) of Arabidopsis thaliana (Mouse-ear cress).